A 404-amino-acid polypeptide reads, in one-letter code: Glucose-1-phosphate adenylyltransferase 2 (404 aa).

Alpha-D-glucose 1-phosphate contacts are provided by residues tyrosine 97, glycine 162, 177-178 (EK), and serine 195.

This sequence belongs to the bacterial/plant glucose-1-phosphate adenylyltransferase family. As to quaternary structure, homotetramer.

The catalysed reaction is alpha-D-glucose 1-phosphate + ATP + H(+) = ADP-alpha-D-glucose + diphosphate. It functions in the pathway glycan biosynthesis; glycogen biosynthesis. Its function is as follows. Involved in the biosynthesis of ADP-glucose, a building block required for the elongation reactions to produce glycogen. Catalyzes the reaction between ATP and alpha-D-glucose 1-phosphate (G1P) to produce pyrophosphate and ADP-Glc. In Vibrio parahaemolyticus serotype O3:K6 (strain RIMD 2210633), this protein is Glucose-1-phosphate adenylyltransferase 2.